A 627-amino-acid polypeptide reads, in one-letter code: Neutral endopeptidase (627 aa).

The Peptidase M13 domain maps to 1-627 (MTRIQDDLFA…RAPENRLKIW (627 aa)). Residue His-475 coordinates Zn(2+). Glu-476 is a catalytic residue. His-479 and Glu-535 together coordinate Zn(2+). The active-site Proton donor is Asp-539.

Belongs to the peptidase M13 family. In terms of assembly, monomer. Zn(2+) is required as a cofactor.

Endopeptidase with broad substrate specificity for several oligopeptides. This is Neutral endopeptidase (pepO) from Lactococcus lactis subsp. lactis (strain IL1403) (Streptococcus lactis).